We begin with the raw amino-acid sequence, 233 residues long: Uracil-DNA glycosylase (233 aa).

Residue D70 is the Proton acceptor of the active site.

This sequence belongs to the uracil-DNA glycosylase (UDG) superfamily. UNG family.

Its subcellular location is the cytoplasm. It carries out the reaction Hydrolyzes single-stranded DNA or mismatched double-stranded DNA and polynucleotides, releasing free uracil.. Its function is as follows. Excises uracil residues from the DNA which can arise as a result of misincorporation of dUMP residues by DNA polymerase or due to deamination of cytosine. The chain is Uracil-DNA glycosylase from Helicobacter pylori (strain HPAG1).